A 101-amino-acid polypeptide reads, in one-letter code: Small ribosomal subunit protein uS14m (101 aa).

The protein belongs to the universal ribosomal protein uS14 family. In terms of assembly, component of the mitochondrial ribosome small subunit (28S) which comprises a 12S rRNA and about 30 distinct proteins. Interacts with LIAT1.

The protein localises to the mitochondrion. This chain is Small ribosomal subunit protein uS14m (mrps14), found in Dictyostelium discoideum (Social amoeba).